A 117-amino-acid polypeptide reads, in one-letter code: Large ribosomal subunit protein bL19 (117 aa).

This sequence belongs to the bacterial ribosomal protein bL19 family.

Its function is as follows. This protein is located at the 30S-50S ribosomal subunit interface and may play a role in the structure and function of the aminoacyl-tRNA binding site. The sequence is that of Large ribosomal subunit protein bL19 from Shewanella halifaxensis (strain HAW-EB4).